The sequence spans 204 residues: LexA repressor (204 aa).

The segment at residues 31-51 (VREIGQAVGLKSSSTVHTHLV) is a DNA-binding region (H-T-H motif). Residues serine 128 and lysine 165 each act as for autocatalytic cleavage activity in the active site.

Belongs to the peptidase S24 family. Homodimer.

The catalysed reaction is Hydrolysis of Ala-|-Gly bond in repressor LexA.. Represses a number of genes involved in the response to DNA damage (SOS response), including recA and lexA. In the presence of single-stranded DNA, RecA interacts with LexA causing an autocatalytic cleavage which disrupts the DNA-binding part of LexA, leading to derepression of the SOS regulon and eventually DNA repair. The protein is LexA repressor of Syntrophomonas wolfei subsp. wolfei (strain DSM 2245B / Goettingen).